The following is a 114-amino-acid chain: Somatostatin-1A (114 aa).

The N-terminal stretch at 1–24 (MLSTRIQCALALLSLALAVCSVSA) is a signal peptide. Positions 25–88 (APTDAKLRQL…KDEVRLELER (64 aa)) are excised as a propeptide. C103 and C114 form a disulfide bridge.

The protein belongs to the somatostatin family.

The protein resides in the secreted. Its function is as follows. Somatostatin inhibits the release of somatotropin. This is Somatostatin-1A (sst1a) from Carassius auratus (Goldfish).